The following is a 271-amino-acid chain: Phosphate import ATP-binding protein PstB 2 (271 aa).

The segment at 1-20 (MLTKKPEINTILQTTPDPHS) is disordered. In terms of domain architecture, ABC transporter spans 25 to 266 (MATEDLHVYY…PQEKQTEDYI (242 aa)). 57–64 (GPSGCGKS) contributes to the ATP binding site.

This sequence belongs to the ABC transporter superfamily. Phosphate importer (TC 3.A.1.7) family. The complex is composed of two ATP-binding proteins (PstB), two transmembrane proteins (PstC and PstA) and a solute-binding protein (PstS).

Its subcellular location is the cell membrane. The enzyme catalyses phosphate(out) + ATP + H2O = ADP + 2 phosphate(in) + H(+). Part of the ABC transporter complex PstSACB involved in phosphate import. Responsible for energy coupling to the transport system. The protein is Phosphate import ATP-binding protein PstB 2 of Listeria innocua serovar 6a (strain ATCC BAA-680 / CLIP 11262).